Consider the following 146-residue polypeptide: Protein beta (146 aa).

This Adelaide River virus (ARV) protein is Protein beta.